Here is a 382-residue protein sequence, read N- to C-terminus: Porphobilinogen deaminase, chloroplastic (382 aa).

The N-terminal 62 residues, 1–62, are a transit peptide targeting the chloroplast; sequence MDIASSSLSQ…KQSSSGFVKA (62 aa). Residues Arg80 and Ser82 each coordinate dipyrromethane. Ser123 bears the Phosphoserine mark. Residues 156-157, 200-206, and 223-229 each bind dipyrromethane; these read KD, TASLRRK, and RGNVQTR. Residue Asp157 is the Proton donor/acceptor of the active site. Residue Cys316 is modified to S-(dipyrrolylmethanemethyl)cysteine.

Belongs to the HMBS family. As to quaternary structure, monomer. Dipyrromethane serves as cofactor.

The protein resides in the plastid. It is found in the chloroplast. It carries out the reaction 4 porphobilinogen + H2O = hydroxymethylbilane + 4 NH4(+). It participates in porphyrin-containing compound metabolism; protoporphyrin-IX biosynthesis; coproporphyrinogen-III from 5-aminolevulinate: step 2/4. It functions in the pathway porphyrin-containing compound metabolism; chlorophyll biosynthesis. Its activity is regulated as follows. Inhibited by NH(3), heavy-metal ions, hydroxylamine and 2-bromoporphobilinogen. Not inhibited by N-ethylmaleimide. Tetrapolymerization of the monopyrrole PBG into the hydroxymethylbilane pre-uroporphyrinogen in several discrete steps. The polypeptide is Porphobilinogen deaminase, chloroplastic (HEMC) (Arabidopsis thaliana (Mouse-ear cress)).